The primary structure comprises 344 residues: Dihydroorotase (344 aa).

Histidine 14 and histidine 16 together coordinate Zn(2+). Residues 16-18 and asparagine 42 contribute to the substrate site; that span reads HFR. The Zn(2+) site is built by lysine 100, histidine 137, and histidine 175. Lysine 100 is modified (N6-carboxylysine). Histidine 137 lines the substrate pocket. Leucine 220 contacts substrate. Zn(2+) is bound at residue aspartate 248. The active site involves aspartate 248. The substrate site is built by histidine 252 and alanine 264.

Belongs to the metallo-dependent hydrolases superfamily. DHOase family. Class II DHOase subfamily. Homodimer. Requires Zn(2+) as cofactor.

The catalysed reaction is (S)-dihydroorotate + H2O = N-carbamoyl-L-aspartate + H(+). It functions in the pathway pyrimidine metabolism; UMP biosynthesis via de novo pathway; (S)-dihydroorotate from bicarbonate: step 3/3. Catalyzes the reversible cyclization of carbamoyl aspartate to dihydroorotate. The polypeptide is Dihydroorotase (Alcanivorax borkumensis (strain ATCC 700651 / DSM 11573 / NCIMB 13689 / SK2)).